Here is a 197-residue protein sequence, read N- to C-terminus: Xanthine phosphoribosyltransferase (197 aa).

Leu-20 and Thr-27 together coordinate xanthine. A 5-phospho-alpha-D-ribose 1-diphosphate-binding site is contributed by 128–132; sequence ANGQA. Lys-156 contacts xanthine.

Belongs to the purine/pyrimidine phosphoribosyltransferase family. Xpt subfamily. As to quaternary structure, homodimer.

It localises to the cytoplasm. The catalysed reaction is XMP + diphosphate = xanthine + 5-phospho-alpha-D-ribose 1-diphosphate. The protein operates within purine metabolism; XMP biosynthesis via salvage pathway; XMP from xanthine: step 1/1. Converts the preformed base xanthine, a product of nucleic acid breakdown, to xanthosine 5'-monophosphate (XMP), so it can be reused for RNA or DNA synthesis. The protein is Xanthine phosphoribosyltransferase of Lactococcus lactis subsp. cremoris (strain SK11).